The primary structure comprises 338 residues: Ketol-acid reductoisomerase (NADP(+)) (338 aa).

In terms of domain architecture, KARI N-terminal Rossmann spans 1 to 181; it reads MKVYYDKDAD…GGGKAGIIET (181 aa). Residues 24 to 27, Arg-47, and Ser-52 each bind NADP(+); that span reads YGSQ. His-107 is an active-site residue. Gly-133 is an NADP(+) binding site. A KARI C-terminal knotted domain is found at 182–327; sequence NFREETETDL…EKLRAMMPWI (146 aa). Mg(2+) contacts are provided by Asp-190, Glu-194, Glu-226, and Glu-230. Ser-251 contacts substrate.

This sequence belongs to the ketol-acid reductoisomerase family. The cofactor is Mg(2+).

The enzyme catalyses (2R)-2,3-dihydroxy-3-methylbutanoate + NADP(+) = (2S)-2-acetolactate + NADPH + H(+). It carries out the reaction (2R,3R)-2,3-dihydroxy-3-methylpentanoate + NADP(+) = (S)-2-ethyl-2-hydroxy-3-oxobutanoate + NADPH + H(+). The protein operates within amino-acid biosynthesis; L-isoleucine biosynthesis; L-isoleucine from 2-oxobutanoate: step 2/4. It functions in the pathway amino-acid biosynthesis; L-valine biosynthesis; L-valine from pyruvate: step 2/4. Its function is as follows. Involved in the biosynthesis of branched-chain amino acids (BCAA). Catalyzes an alkyl-migration followed by a ketol-acid reduction of (S)-2-acetolactate (S2AL) to yield (R)-2,3-dihydroxy-isovalerate. In the isomerase reaction, S2AL is rearranged via a Mg-dependent methyl migration to produce 3-hydroxy-3-methyl-2-ketobutyrate (HMKB). In the reductase reaction, this 2-ketoacid undergoes a metal-dependent reduction by NADPH to yield (R)-2,3-dihydroxy-isovalerate. The sequence is that of Ketol-acid reductoisomerase (NADP(+)) from Variovorax paradoxus (strain S110).